We begin with the raw amino-acid sequence, 62 residues long: Large ribosomal subunit protein eL19 (62 aa).

It belongs to the eukaryotic ribosomal protein eL19 family.

The protein is Large ribosomal subunit protein eL19 (RPL19) of Zea mays (Maize).